Here is a 185-residue protein sequence, read N- to C-terminus: Elongation factor P (185 aa).

Belongs to the elongation factor P family.

It localises to the cytoplasm. It functions in the pathway protein biosynthesis; polypeptide chain elongation. Its function is as follows. Involved in peptide bond synthesis. Stimulates efficient translation and peptide-bond synthesis on native or reconstituted 70S ribosomes in vitro. Probably functions indirectly by altering the affinity of the ribosome for aminoacyl-tRNA, thus increasing their reactivity as acceptors for peptidyl transferase. This Agathobacter rectalis (strain ATCC 33656 / DSM 3377 / JCM 17463 / KCTC 5835 / VPI 0990) (Eubacterium rectale) protein is Elongation factor P.